Reading from the N-terminus, the 161-residue chain is RNA pyrophosphohydrolase (161 aa).

Residues 12–154 enclose the Nudix hydrolase domain; it reads PYRPGVGMMI…KRKLYQAVVK (143 aa). A Nudix box motif is present at residues 46-67; that stretch reads GGIVPGETPSIAAMREMLEEIG.

Belongs to the Nudix hydrolase family. RppH subfamily. Requires a divalent metal cation as cofactor.

Accelerates the degradation of transcripts by removing pyrophosphate from the 5'-end of triphosphorylated RNA, leading to a more labile monophosphorylated state that can stimulate subsequent ribonuclease cleavage. This is RNA pyrophosphohydrolase from Rickettsia peacockii (strain Rustic).